The chain runs to 332 residues: MQPETQSSALPAYRFSIAPMLDWTDRHCRYFLRLLSRQTLLYTEMVTTGAIIHGKGDYLAYSEEEHPVALQLGGSDPAQLAHCAKLAEARGYDEINLNVGCPSDRVQNGMFGACLMGNAQLVADCVKAMRDVVSIPVTVKTRIGIDDQDSYAFLCDFINTVSGQGECEMFIIHARKAWLSGLSPKENREIPPLDYPRVYQLKRDFPHLTMSINGGIKSLEEAKEHLRHMDGVMVGREAYQNPGILAAVDREIFGADTTDTDPVAVVRAMYPYIERELSQGAYLGHITRHMLGLFQGIPGARQWRRYLSENAHKAGADAAVLEQALKLIADKR.

FMN contacts are provided by residues Pro-19–Leu-21 and Gln-71. Cys-101 acts as the Proton donor in catalysis. FMN-binding positions include Lys-140, His-173, Asn-213 to Gly-215, and Gly-235 to Arg-236.

This sequence belongs to the Dus family. DusA subfamily. The cofactor is FMN.

It carries out the reaction 5,6-dihydrouridine(20) in tRNA + NADP(+) = uridine(20) in tRNA + NADPH + H(+). It catalyses the reaction 5,6-dihydrouridine(20) in tRNA + NAD(+) = uridine(20) in tRNA + NADH + H(+). The catalysed reaction is 5,6-dihydrouridine(20a) in tRNA + NADP(+) = uridine(20a) in tRNA + NADPH + H(+). The enzyme catalyses 5,6-dihydrouridine(20a) in tRNA + NAD(+) = uridine(20a) in tRNA + NADH + H(+). Functionally, catalyzes the synthesis of 5,6-dihydrouridine (D), a modified base found in the D-loop of most tRNAs, via the reduction of the C5-C6 double bond in target uridines. Specifically modifies U20 and U20a in tRNAs. This is tRNA-dihydrouridine(20/20a) synthase from Salmonella typhi.